Here is a 551-residue protein sequence, read N- to C-terminus: Inosine-5'-monophosphate dehydrogenase (551 aa).

CBS domains lie at 102–163 and 165–221; these read FILD…PLSE and MTSD…PLAS. NAD(+)-binding positions include 258–260 and 308–310; these read DSS and GMG. G310 and G312 together coordinate K(+). S313 serves as a coordination point for IMP. C315 contacts K(+). C315 (thioimidate intermediate) is an active-site residue. IMP-binding positions include 349–351, 372–373, and 396–400; these read DGG, GS, and YRGMG. The disordered stretch occupies residues 407–462; the sequence is AGTRRTASPPARGLRSPEASPSTAASSGGASRASALSEASPSAKSEASRTSTSTGS. The segment covering 422-462 has biased composition (low complexity); sequence SPEASPSTAASSGGASRASALSEASPSAKSEASRTSTSTGS. R465 functions as the Proton acceptor in the catalytic mechanism. Position 477 (Q477) interacts with IMP. Positions 536 and 537 each coordinate K(+).

Belongs to the IMPDH/GMPR family. Homotetramer. It depends on K(+) as a cofactor.

It localises to the cytoplasm. It carries out the reaction IMP + NAD(+) + H2O = XMP + NADH + H(+). The protein operates within purine metabolism; XMP biosynthesis via de novo pathway; XMP from IMP: step 1/1. With respect to regulation, mycophenolic acid (MPA) is a non-competitive inhibitor that prevents formation of the closed enzyme conformation by binding to the same site as the amobile flap. In contrast, mizoribine monophosphate (MZP) is a competitive inhibitor that induces the closed conformation. MPA is a potent inhibitor of mammalian IMPDHs but a poor inhibitor of the bacterial enzymes. MZP is a more potent inhibitor of bacterial IMPDH. Potently inhibited by MPA and adenine dinucleotide analogs such as thiazole-4-carboxamide adenine dinucleotide (TAD). Its function is as follows. Catalyzes the conversion of inosine 5'-phosphate (IMP) to xanthosine 5'-phosphate (XMP), the first committed and rate-limiting step in the de novo synthesis of guanine nucleotides, and therefore plays an important role in the regulation of cell growth. The chain is Inosine-5'-monophosphate dehydrogenase from Toxoplasma gondii.